The chain runs to 314 residues: tRNA N6-adenosine threonylcarbamoyltransferase (314 aa).

Residues histidine 106, histidine 110, and tyrosine 127 each coordinate Fe cation. Residues 127–131 (YVSGA), aspartate 159, glycine 172, glutamate 176, and asparagine 255 contribute to the substrate site. Residue aspartate 283 coordinates Fe cation.

Belongs to the KAE1 / TsaD family. Requires Fe(2+) as cofactor.

It localises to the cytoplasm. The catalysed reaction is L-threonylcarbamoyladenylate + adenosine(37) in tRNA = N(6)-L-threonylcarbamoyladenosine(37) in tRNA + AMP + H(+). In terms of biological role, required for the formation of a threonylcarbamoyl group on adenosine at position 37 (t(6)A37) in tRNAs that read codons beginning with adenine. Is probably involved in the transfer of the threonylcarbamoyl moiety of threonylcarbamoyl-AMP (TC-AMP) to the N6 group of A37. The protein is tRNA N6-adenosine threonylcarbamoyltransferase of Nanoarchaeum equitans (strain Kin4-M).